The following is a 303-amino-acid chain: Glutamyl-Q tRNA(Asp) synthetase (303 aa).

Residues 9–13 (RFAPS) and E45 each bind L-glutamate. A 'HIGH' region motif is present at residues 12 to 22 (PSPTGAMHLGN). 4 residues coordinate Zn(2+): C100, C102, Y125, and C129. 2 residues coordinate L-glutamate: Y184 and R202. A 'KMSKS' region motif is present at residues 240–244 (RLAKR). Position 243 (K243) interacts with ATP.

The protein belongs to the class-I aminoacyl-tRNA synthetase family. GluQ subfamily. Requires Zn(2+) as cofactor.

Its function is as follows. Catalyzes the tRNA-independent activation of glutamate in presence of ATP and the subsequent transfer of glutamate onto a tRNA(Asp). Glutamate is transferred on the 2-amino-5-(4,5-dihydroxy-2-cyclopenten-1-yl) moiety of the queuosine in the wobble position of the QUC anticodon. The sequence is that of Glutamyl-Q tRNA(Asp) synthetase from Deinococcus geothermalis (strain DSM 11300 / CIP 105573 / AG-3a).